We begin with the raw amino-acid sequence, 454 residues long: Chromosomal replication initiator protein DnaA (454 aa).

Residues methionine 1 to isoleucine 74 form a domain I, interacts with DnaA modulators region. Residues isoleucine 74–leucine 116 form a domain II region. Residues proline 88–phenylalanine 112 form a disordered region. The span at lysine 101–phenylalanine 112 shows a compositional bias: basic and acidic residues. The segment at arginine 117–alanine 333 is domain III, AAA+ region. ATP-binding residues include glycine 161, glycine 163, lysine 164, and threonine 165. A domain IV, binds dsDNA region spans residues threonine 334 to arginine 454.

The protein belongs to the DnaA family. Oligomerizes as a right-handed, spiral filament on DNA at oriC.

It localises to the cytoplasm. Its function is as follows. Plays an essential role in the initiation and regulation of chromosomal replication. ATP-DnaA binds to the origin of replication (oriC) to initiate formation of the DNA replication initiation complex once per cell cycle. Binds the DnaA box (a 9 base pair repeat at the origin) and separates the double-stranded (ds)DNA. Forms a right-handed helical filament on oriC DNA; dsDNA binds to the exterior of the filament while single-stranded (ss)DNA is stabiized in the filament's interior. The ATP-DnaA-oriC complex binds and stabilizes one strand of the AT-rich DNA unwinding element (DUE), permitting loading of DNA polymerase. After initiation quickly degrades to an ADP-DnaA complex that is not apt for DNA replication. Binds acidic phospholipids. In Lactobacillus delbrueckii subsp. bulgaricus (strain ATCC 11842 / DSM 20081 / BCRC 10696 / JCM 1002 / NBRC 13953 / NCIMB 11778 / NCTC 12712 / WDCM 00102 / Lb 14), this protein is Chromosomal replication initiator protein DnaA.